The following is a 312-amino-acid chain: uncharacterized protein (312 aa).

The region spanning 8-65 (PGLTCFEIFLAIAEAGSLGGAARELGLTQQAVSRRLASMEAQIGVRLAIRTTRGSQLT) is the HTH lysR-type domain. Positions 25-45 (LGGAARELGLTQQAVSRRLAS) form a DNA-binding region, H-T-H motif.

The protein belongs to the LysR transcriptional regulatory family.

This is an uncharacterized protein from Mycobacterium tuberculosis (strain CDC 1551 / Oshkosh).